Reading from the N-terminus, the 310-residue chain is Olfactory receptor 5P80 (310 aa).

The Extracellular portion of the chain corresponds to 1 to 25; the sequence is MEPGNYTVVTEVILLGFTEDAIIRA. N-linked (GlcNAc...) asparagine glycosylation occurs at asparagine 5. The helical transmembrane segment at 26–46 threads the bilayer; it reads ILFIVFLIIYSVTLMGNASII. The Cytoplasmic segment spans residues 47 to 54; the sequence is MLIRRSPQ. Residues 55–75 form a helical membrane-spanning segment; it reads LHTPMYLLLSHLAFVDIGYSS. Residues 76–99 are Extracellular-facing; the sequence is SVTPIMLKGFLRKETFILVSGCVA. Cysteine 97 and cysteine 189 are joined by a disulfide. The chain crosses the membrane as a helical span at residues 100–120; the sequence is QLCSVVTFGSTECFLLAAMAY. Over 121 to 133 the chain is Cytoplasmic; that stretch reads DRYVAICSPLLYA. Residues 134–154 traverse the membrane as a helical segment; the sequence is TQMSSTVCILLVGASYLGGCV. The Extracellular portion of the chain corresponds to 155-196; the sequence is NAWTFTGCLLNLSFCRPNKVNHFFCDYSPLLKISCSHDFSSE. Asparagine 165 carries N-linked (GlcNAc...) asparagine glycosylation. Residues 197–217 form a helical membrane-spanning segment; sequence VIPAISSGSIIVVTVFIIALS. The Cytoplasmic portion of the chain corresponds to 218–237; it reads YVYILVSILKMRSTEGRQKA. A helical transmembrane segment spans residues 238-258; the sequence is FSTCTSHLTAVTLFYGTITFI. Over 259 to 271 the chain is Extracellular; that stretch reads YVMPKSSYSTDQN. Residues 272 to 292 traverse the membrane as a helical segment; it reads KVVSVFYTVVIPMLNPIIYSL. Over 293–310 the chain is Cytoplasmic; the sequence is RNKDVKEAMKKLMANTHH.

This sequence belongs to the G-protein coupled receptor 1 family.

It localises to the cell membrane. In terms of biological role, potential odorant receptor. The sequence is that of Olfactory receptor 5P80 from Mus musculus (Mouse).